An 808-amino-acid chain; its full sequence is DNA gyrase subunit B (808 aa).

A Toprim domain is found at 429 to 544; that stretch reads SELFIVEGDS…KGYLYIAQPP (116 aa). The Mg(2+) site is built by glutamate 435, aspartate 509, and aspartate 511.

The protein belongs to the type II topoisomerase GyrB family. As to quaternary structure, heterotetramer, composed of two GyrA and two GyrB chains. In the heterotetramer, GyrA contains the active site tyrosine that forms a transient covalent intermediate with DNA, while GyrB binds cofactors and catalyzes ATP hydrolysis. It depends on Mg(2+) as a cofactor. Mn(2+) is required as a cofactor. Ca(2+) serves as cofactor.

It is found in the cytoplasm. It catalyses the reaction ATP-dependent breakage, passage and rejoining of double-stranded DNA.. Its function is as follows. A type II topoisomerase that negatively supercoils closed circular double-stranded (ds) DNA in an ATP-dependent manner to modulate DNA topology and maintain chromosomes in an underwound state. Negative supercoiling favors strand separation, and DNA replication, transcription, recombination and repair, all of which involve strand separation. Also able to catalyze the interconversion of other topological isomers of dsDNA rings, including catenanes and knotted rings. Type II topoisomerases break and join 2 DNA strands simultaneously in an ATP-dependent manner. In Rickettsia bellii (strain RML369-C), this protein is DNA gyrase subunit B.